We begin with the raw amino-acid sequence, 276 residues long: Homeobox protein TOS8 (276 aa).

The segment covering 176–185 has biased composition (polar residues); sequence NSVRGSNNGY. Residues 176–199 form a disordered region; it reads NSVRGSNNGYSAKEKKHKAHGKRS. The span at 189-199 shows a compositional bias: basic residues; sequence EKKHKAHGKRS. A DNA-binding region (homeobox; TALE-type) is located at residues 194-256; sequence AHGKRSNLPK…NARRRKIFSG (63 aa).

The protein belongs to the TALE/CUP9 homeobox family.

The protein localises to the nucleus. The polypeptide is Homeobox protein TOS8 (TOS8) (Saccharomyces cerevisiae (strain ATCC 204508 / S288c) (Baker's yeast)).